The chain runs to 303 residues: MPAATKDSDGGWKKFLWNSEKKEFLGRTGGSWAKILLFYVIFYGCLAGIFIGTIQALLLTINDFKPVYQDRVAPPGLSHTPRSEKSEMSFKVGDPSTYQKYVKAMHDFLQAYNDSKQENMMKYEDCGDTPKSYINRGELDNNQGIKKACIFRRSWLDKCSGLEDPTFGFSEGKPCLIVKLNRIVNFRPRPPTSNDSIPEEAQSKVQPDVIPIYCTNKREEDAAKVREIKYYGIQEGFPLQYYPYYGKQLHPQYLQPLVAVHFTNLTMATELRIECRVYGQNIAYSDKDRYRGRFDVKFTINES.

Residues 1-34 are Cytoplasmic-facing; sequence MPAATKDSDGGWKKFLWNSEKKEFLGRTGGSWAK. The helical; Signal-anchor for type II membrane protein transmembrane segment at 35–55 threads the bilayer; it reads ILLFYVIFYGCLAGIFIGTIQ. Residues 56 to 303 lie on the Extracellular side of the membrane; it reads ALLLTINDFK…FDVKFTINES (248 aa). Asparagine 113 carries an N-linked (GlcNAc...) asparagine glycan. 2 disulfides stabilise this stretch: cysteine 126-cysteine 149 and cysteine 159-cysteine 175. 2 N-linked (GlcNAc...) asparagine glycosylation sites follow: asparagine 194 and asparagine 264. A disulfide bridge connects residues cysteine 214 and cysteine 275.

Belongs to the X(+)/potassium ATPases subunit beta family. As to quaternary structure, the sodium/potassium-transporting ATPase is composed of a catalytic alpha subunit, an auxiliary non-catalytic beta subunit and an additional regulatory subunit. In terms of tissue distribution, detected in all tissues except liver and cardiac muscle. Highest levels found in intestine, ovary and kidney with marginally lower levels in brain, spleen, esophagus, eye and pancreas, intermediate levels in gill and low levels in white and red skeletal muscle.

It localises to the cell membrane. Functionally, this is the non-catalytic component of the active enzyme, which catalyzes the hydrolysis of ATP coupled with the exchange of Na(+) and K(+) ions across the plasma membrane. The beta subunit regulates, through assembly of alpha/beta heterodimers, the number of sodium pumps transported to the plasma membrane. The sequence is that of Sodium/potassium-transporting ATPase subunit beta-1 (atp1b1) from Anguilla anguilla (European freshwater eel).